The primary structure comprises 561 residues: Urocanate hydratase (561 aa).

NAD(+) contacts are provided by residues 52 to 53 (GG), Q130, 176 to 178 (GMG), E196, R201, 242 to 243 (NA), 263 to 267 (QTSAH), 273 to 274 (YL), and Y322. C410 is a catalytic residue. Residue G492 coordinates NAD(+).

The protein belongs to the urocanase family. NAD(+) is required as a cofactor.

The protein localises to the cytoplasm. The catalysed reaction is 4-imidazolone-5-propanoate = trans-urocanate + H2O. It participates in amino-acid degradation; L-histidine degradation into L-glutamate; N-formimidoyl-L-glutamate from L-histidine: step 2/3. In terms of biological role, catalyzes the conversion of urocanate to 4-imidazolone-5-propionate. In Salmonella arizonae (strain ATCC BAA-731 / CDC346-86 / RSK2980), this protein is Urocanate hydratase.